We begin with the raw amino-acid sequence, 884 residues long: DNA mismatch repair protein MutS (884 aa).

ATP is bound at residue 651–658 (GPNMSGKS). Residues 843–884 (LRNQGKSQPAQKNCKKEPAPNRSPDPAVGDQLSLIPAPLFPD) are disordered.

Belongs to the DNA mismatch repair MutS family.

In terms of biological role, this protein is involved in the repair of mismatches in DNA. It is possible that it carries out the mismatch recognition step. This protein has a weak ATPase activity. The chain is DNA mismatch repair protein MutS from Synechococcus sp. (strain JA-2-3B'a(2-13)) (Cyanobacteria bacterium Yellowstone B-Prime).